The sequence spans 433 residues: Polygalacturonase ADPG2 (433 aa).

The signal sequence occupies residues 1–24 (MARCTNLVTVFLLWALLMFSWCKA). PbH1 repeat units lie at residues 223-249 (CSNV…HITN), 250-271 (TQNI…SIES), 273-293 (SQNV…SIGS), 303-324 (VSGV…RIKT), and 332-353 (ASNI…IIDQ). Catalysis depends on Asp-264, which acts as the Proton donor. The active site involves His-287.

The protein belongs to the glycosyl hydrolase 28 family. As to expression, expressed in roots and in the abscission zone of the sepals, petals and stamens of flowers, at the base of cauline leaves and in the basal cell of trichomes from senescing leaves. Found at the site of lateral root emergence, in the dehiscence zone of anthers and maturing siliques. Also expressed early in anther development, at the time of microspore separation. Expressed in germinating seeds, at the point at which the radicle broke through the seed coat. Not expressed at the junction between the seed and the funiculus or in the dehiscence zone of anthers or pods.

The protein resides in the secreted. It localises to the cell wall. It carries out the reaction (1,4-alpha-D-galacturonosyl)n+m + H2O = (1,4-alpha-D-galacturonosyl)n + (1,4-alpha-D-galacturonosyl)m.. Functionally, polygalacturonase involved in cell separation in the final stages of pod shatter, in anther dehiscence and in floral organ abscission. In Arabidopsis thaliana (Mouse-ear cress), this protein is Polygalacturonase ADPG2 (ADPG2).